Reading from the N-terminus, the 88-residue chain is Apolipoprotein C-I (88 aa).

Residues 1 to 26 (MRLFLSLPVWVAVLAMVLEGPAPAQA) form the signal peptide.

This sequence belongs to the apolipoprotein C1 family.

Its subcellular location is the secreted. Inhibitor of lipoprotein binding to the low density lipoprotein (LDL) receptor, LDL receptor-related protein, and very low density lipoprotein (VLDL) receptor. Associates with high density lipoproteins (HDL) and the triacylglycerol-rich lipoproteins in the plasma and makes up about 10% of the protein of the VLDL and 2% of that of HDL. Appears to interfere directly with fatty acid uptake and is also the major plasma inhibitor of cholesteryl ester transfer protein (CETP). Binds free fatty acids and reduces their intracellular esterification. Modulates the interaction of APOE with beta-migrating VLDL and inhibits binding of beta-VLDL to the LDL receptor-related protein. The sequence is that of Apolipoprotein C-I (APOC1) from Ursus maritimus (Polar bear).